The following is an 836-amino-acid chain: Protein PDC2 (836 aa).

Positions 64 to 139 (ELIRRRKRAN…VKKLNINITG (76 aa)) constitute an HTH CENPB-type domain. Low complexity predominate over residues 626–640 (TTSTSVVSDSPSGTT). Positions 626-732 (TTSTSVVSDS…NVQFGNGAGS (107 aa)) are disordered. A compositionally biased stretch (polar residues) spans 641–651 (QKYNNISTYPN). The segment covering 677-698 (GQELQNPQGQQQQEQQQQQQHQ) has biased composition (low complexity). The span at 699 to 711 (MSGYNFSPISNIE) shows a compositional bias: polar residues.

Its function is as follows. Essential for the synthesis of pyruvate decarboxylase. In Candida albicans (Yeast), this protein is Protein PDC2 (PDC2).